The sequence spans 367 residues: Molybdopterin synthase catalytic subunit (367 aa).

Substrate-binding positions include 101–102 (HR), Lys-117, and 124–126 (KKE).

Belongs to the MoaE family. MOCS2B subfamily. Heterotetramer; composed of 2 small (Mocs2A) and 2 large (Mocs2B) subunits.

The protein resides in the cytoplasm. The catalysed reaction is 2 [molybdopterin-synthase sulfur-carrier protein]-C-terminal-Gly-aminoethanethioate + cyclic pyranopterin phosphate + H2O = molybdopterin + 2 [molybdopterin-synthase sulfur-carrier protein]-C-terminal Gly-Gly + 2 H(+). The protein operates within cofactor biosynthesis; molybdopterin biosynthesis. Catalytic subunit of the molybdopterin synthase complex, a complex that catalyzes the conversion of precursor Z into molybdopterin. Acts by mediating the incorporation of 2 sulfur atoms from thiocarboxylated Mocs2A into precursor Z to generate a dithiolene group. The sequence is that of Molybdopterin synthase catalytic subunit from Drosophila erecta (Fruit fly).